The sequence spans 2261 residues: Phospholipid-transporting ATPase ABCA1 (2261 aa).

A lipid anchor (S-palmitoyl cysteine) is attached at cysteine 3. Residue asparagine 14 is glycosylated (N-linked (GlcNAc...) asparagine). Residues 22-42 (TCQLLLEVAWPLFIFLILISV) traverse the membrane as a helical segment. The S-palmitoyl cysteine moiety is linked to residue cysteine 23. The Extracellular segment spans residues 43–639 (RLSYPPYEQH…DIFLRVMSRS (597 aa)). The interval 69-80 (WVQGIICNANNP) is annulus domain 1. A disulfide bridge links cysteine 75 with cysteine 309. Asparagine 98, asparagine 151, asparagine 161, asparagine 196, asparagine 244, asparagine 292, asparagine 337, and asparagine 349 each carry an N-linked (GlcNAc...) asparagine glycan. Residues 368 to 379 (SRIIWKALKPLL) form an annulus domain 2 region. N-linked (GlcNAc...) asparagine glycosylation is found at asparagine 400, asparagine 478, asparagine 489, and asparagine 521. A gateway domain region spans residues 564-594 (ERTNKIKDGYWDPGPRADPFEDMRYVWGGFA). The next 5 helical transmembrane spans lie at 640 to 660 (MPLF…KGIV), 683 to 703 (FSWF…LVVI), 716 to 736 (SVVF…CFLI), 745 to 765 (LAAA…VLCV), and 777 to 797 (IFAS…FALF). Residue asparagine 820 is glycosylated (N-linked (GlcNAc...) asparagine). The helical transmembrane segment at 827-847 (MMLFDTFLYGVMTWYIEAVFP) threads the bilayer. The ABC transporter 1 domain occupies 899 to 1131 (VSIQNLVKVY…LGTGYYLTLV (233 aa)). 933–940 (GHNGAGKT) contacts ATP. Residues 1041–1057 (LSVALAFVGGSKVVILD) traverse the membrane as a helical segment. A Phosphoserine; by PKA modification is found at serine 1042. 2 S-palmitoyl cysteine lipidation sites follow: cysteine 1110 and cysteine 1111. N-linked (GlcNAc...) asparagine glycosylation is found at asparagine 1144 and asparagine 1294. Positions 1283-1312 (RPFTEDDAADPNDSDIDPESRETDLLSGMD) are disordered. The span at 1287–1299 (EDDAADPNDSDID) shows a compositional bias: acidic residues. Residue serine 1296 is modified to Phosphoserine. The helical transmembrane segment at 1351 to 1371 (IVLPAVFVCIALVFSLIVPPF) threads the bilayer. Topologically, residues 1372-1656 (GKYPSLELQP…ALMTTSVDVL (285 aa)) are extracellular. Asparagine 1453 is a glycosylation site (N-linked (GlcNAc...) asparagine). Residues cysteine 1463 and cysteine 1477 are joined by a disulfide bond. N-linked (GlcNAc...) asparagine glycans are attached at residues asparagine 1504 and asparagine 1637. 6 helical membrane-spanning segments follow: residues 1657–1677 (VSIC…VFLI), 1703–1723 (FVWD…IFIC), 1735–1755 (LPVL…LMYP), 1768–1788 (VVLT…TFVL), 1802–1822 (ILKS…LIDM), and 1852–1872 (NLFA…LIQY). An ABC transporter 2 domain is found at 1912-2144 (LEIKELTKIY…FGDGYTIVVR (233 aa)). 1946 to 1953 (GVNGAGKS) contributes to the ATP binding site. Residue asparagine 2044 is glycosylated (N-linked (GlcNAc...) asparagine). A Phosphoserine; by PKA modification is found at serine 2054. Asparagine 2238 carries N-linked (GlcNAc...) asparagine glycosylation.

Belongs to the ABC transporter superfamily. ABCA family. As to quaternary structure, interacts with MEGF10. May interact with APOE1; functionally associated with APOE1 in the biogenesis of HDLs. Interacts with ABCA8; this interaction potentiates cholesterol efflux. Interacts with ABCA12 and NR1H2; this interaction is required for ABCA1 localization to the cell surface and is necessary for its normal activity and stability. Post-translationally, phosphorylation on Ser-2054 regulates phospholipid efflux. In terms of processing, palmitoylated by ZDHHC8. Palmitoylation is essential for localization to the plasma membrane. In terms of tissue distribution, widely expressed, but most abundant in macrophages.

The protein resides in the cell membrane. It is found in the endosome. The enzyme catalyses ATP + H2O + phospholipidSide 1 = ADP + phosphate + phospholipidSide 2.. It catalyses the reaction a 1,2-diacyl-sn-glycero-3-phosphocholine(out) + ATP + H2O = a 1,2-diacyl-sn-glycero-3-phosphocholine(in) + ADP + phosphate + H(+). The catalysed reaction is a 1,2-diacyl-sn-glycero-3-phospho-L-serine(out) + ATP + H2O = a 1,2-diacyl-sn-glycero-3-phospho-L-serine(in) + ADP + phosphate + H(+). It carries out the reaction a sphingomyelin(in) + ATP + H2O = a sphingomyelin(out) + ADP + phosphate + H(+). The enzyme catalyses cholesterol(in) + ATP + H2O = cholesterol(out) + ADP + phosphate + H(+). With respect to regulation, ATPase activity is decreased by cholesterol and ceramide. ATPase activity is stimulated by phosphatidylcholine and to a lesser degree by phosphatidylserine and sphingomyelin. Phospholipid translocase activity is highly reduced by berylium fluoride and aluminum flouride and reduced by N-ethylmaleimide. In terms of biological role, catalyzes the translocation of specific phospholipids from the cytoplasmic to the extracellular/lumenal leaflet of membrane coupled to the hydrolysis of ATP. Thereby, participates in phospholipid transfer to apolipoproteins to form nascent high density lipoproteins/HDLs. Transports preferentially phosphatidylcholine over phosphatidylserine. May play a similar role in the efflux of intracellular cholesterol to apolipoproteins and the formation of nascent high density lipoproteins/HDLs. Translocates phospholipids from the outer face of the plasma membrane and forces it through its gateway and annulus into an elongated hydrophobic tunnel in its extracellular domain. The chain is Phospholipid-transporting ATPase ABCA1 from Homo sapiens (Human).